Here is a 327-residue protein sequence, read N- to C-terminus: Serine/threonine-protein phosphatase PP1-beta catalytic subunit (327 aa).

Ala-2 is subject to N-acetylalanine. Residues Asp-63, His-65, Asp-91, and Asn-123 each coordinate Mn(2+). His-124 (proton donor) is an active-site residue. Residues His-172 and His-247 each contribute to the Mn(2+) site. The interval 305–327 is disordered; it reads QYGGLNSGRPVTPPRTANPPKKR. Thr-316 carries the post-translational modification Phosphothreonine.

It belongs to the PPP phosphatase family. PP-1 subfamily. As to quaternary structure, PP1 comprises a catalytic subunit, PPP1CA, PPP1CB or PPP1CC, which is folded into its native form by inhibitor 2 and glycogen synthetase kinase 3, and then complexed to one or several targeting or regulatory subunits. The targeting or regulatory subunits determine the substrate specificity of PP1. PPP1R12A, PPP1R12B and PPP1R12C mediate binding to myosin. PPP1R3A (in skeletal muscle), PPP1R3B (in liver), PPP1R3C, PPP1R3D and PPP1R3F (in brain) mediate binding to glycogen. PPP1R15A and PPP1R15B mediate binding to EIF2S1. Part of a complex containing PPP1R15B, PP1 and NCK1/2. Interacts with PPP1R7 and PPP1R12C. Interacts with PPP1R16B. Component of the PTW/PP1 phosphatase complex, composed of PPP1R10/PNUTS, TOX4, WDR82, and PPP1CA or PPP1CB or PPP1CC. Interacts with PPP1R8. Interacts with PPP1R12A and NUAK1; the interaction is direct. Interacts with TRIM28; the interaction is weak. Interacts with FOXP3. Interacts with RRP1B. Interacts with SERPINE1. Interacts with LZTR1. Component of the SHOC2-MRAS-PP1c (SMP) complex consisting of SHOC2, GTP-bound M-Ras/MRAS and the catalytic subunit of protein phosphatase 1 (either PPP1CA, PPP1CB or PPP1CC). SHOC2 and PP1c preferably bind M-Ras/MRAS, but they also bind K-Ras/KRAS, N-Ras/NRAS and H-Ras/HRAS; these interactions are GTP-dependent and both SHOC2 and PP1c are required to form a stable complex. Interacts with SHOC2 in the absence of Ras GTPases. It depends on Mn(2+) as a cofactor.

The protein resides in the cytoplasm. Its subcellular location is the nucleus. It is found in the nucleoplasm. The protein localises to the nucleolus. It catalyses the reaction O-phospho-L-seryl-[protein] + H2O = L-seryl-[protein] + phosphate. The enzyme catalyses O-phospho-L-threonyl-[protein] + H2O = L-threonyl-[protein] + phosphate. The catalysed reaction is O-phospho-L-seryl-[myosin light chain] + H2O = L-seryl-[myosin light chain] + phosphate. It carries out the reaction O-phospho-L-threonyl-[myosin light chain] + H2O = L-threonyl-[myosin light chain] + phosphate. With respect to regulation, inhibited by the toxins okadaic acid, tautomycin and microcystin Leu-Arg. The phosphatase activity of the PPP1R15A-PP1 complex toward EIF2S1 is specifically inhibited by Salubrinal, a drug that protects cells from endoplasmic reticulum stress. Its function is as follows. Protein phosphatase that associates with over 200 regulatory proteins to form highly specific holoenzymes which dephosphorylate hundreds of biological targets. Protein phosphatase (PP1) is essential for cell division, it participates in the regulation of glycogen metabolism, muscle contractility and protein synthesis. Involved in regulation of ionic conductances and long-term synaptic plasticity. Component of the PTW/PP1 phosphatase complex, which plays a role in the control of chromatin structure and cell cycle progression during the transition from mitosis into interphase. In balance with CSNK1D and CSNK1E, determines the circadian period length, through the regulation of the speed and rhythmicity of PER1 and PER2 phosphorylation. May dephosphorylate CSNK1D and CSNK1E. Core component of the SHOC2-MRAS-PP1c (SMP) holophosphatase complex that regulates the MAPK pathway activation. The SMP complex specifically dephosphorylates the inhibitory phosphorylation at 'Ser-259' of RAF1 kinase, 'Ser-365' of BRAF kinase and 'Ser-214' of ARAF kinase, stimulating their kinase activities. The SMP complex enhances the dephosphorylation activity and substrate specificity of PP1c. This chain is Serine/threonine-protein phosphatase PP1-beta catalytic subunit (PPP1CB), found in Bos taurus (Bovine).